A 158-amino-acid chain; its full sequence is uncharacterized protein (158 aa).

Belongs to the SixA phosphatase family.

This is an uncharacterized protein from Mycobacterium tuberculosis (strain CDC 1551 / Oshkosh).